A 202-amino-acid chain; its full sequence is LexA repressor (202 aa).

The segment at residues 28–48 (RAEIAQRLGFRSPNAAEEHLK) is a DNA-binding region (H-T-H motif). Active-site for autocatalytic cleavage activity residues include S119 and K156.

This sequence belongs to the peptidase S24 family. Homodimer.

It carries out the reaction Hydrolysis of Ala-|-Gly bond in repressor LexA.. Represses a number of genes involved in the response to DNA damage (SOS response), including recA and lexA. Binds to the 16 bp palindromic sequence 5'-CTGTATATATATACAG-3'. In the presence of single-stranded DNA, RecA interacts with LexA causing an autocatalytic cleavage which disrupts the DNA-binding part of LexA, leading to derepression of the SOS regulon and eventually DNA repair. The sequence is that of LexA repressor from Citrobacter koseri (strain ATCC BAA-895 / CDC 4225-83 / SGSC4696).